The chain runs to 373 residues: Chaperone protein DnaJ (373 aa).

In terms of domain architecture, J spans 5–70 (DYYEVLGVAK…QKRAAYDRYG (66 aa)). The segment at 133 to 211 (GFDTEIRVPS…CDGVGRTRRN (79 aa)) adopts a CR-type zinc-finger fold. The Zn(2+) site is built by Cys146, Cys149, Cys163, Cys166, Cys185, Cys188, Cys199, and Cys202. CXXCXGXG motif repeat units lie at residues 146–153 (CDTCHGSG), 163–170 (CRTCGGSG), 185–192 (CPTCHGTG), and 199–206 (CPSCDGVG).

Belongs to the DnaJ family. As to quaternary structure, homodimer. Zn(2+) serves as cofactor.

It localises to the cytoplasm. Its function is as follows. Participates actively in the response to hyperosmotic and heat shock by preventing the aggregation of stress-denatured proteins and by disaggregating proteins, also in an autonomous, DnaK-independent fashion. Unfolded proteins bind initially to DnaJ; upon interaction with the DnaJ-bound protein, DnaK hydrolyzes its bound ATP, resulting in the formation of a stable complex. GrpE releases ADP from DnaK; ATP binding to DnaK triggers the release of the substrate protein, thus completing the reaction cycle. Several rounds of ATP-dependent interactions between DnaJ, DnaK and GrpE are required for fully efficient folding. Also involved, together with DnaK and GrpE, in the DNA replication of plasmids through activation of initiation proteins. The protein is Chaperone protein DnaJ of Bordetella bronchiseptica (strain ATCC BAA-588 / NCTC 13252 / RB50) (Alcaligenes bronchisepticus).